The sequence spans 252 residues: Hydroxyacylglutathione hydrolase (252 aa).

Positions 54, 56, 58, 59, 113, 132, and 170 each coordinate Zn(2+).

Belongs to the metallo-beta-lactamase superfamily. Glyoxalase II family. Monomer. Zn(2+) serves as cofactor.

The catalysed reaction is an S-(2-hydroxyacyl)glutathione + H2O = a 2-hydroxy carboxylate + glutathione + H(+). It participates in secondary metabolite metabolism; methylglyoxal degradation; (R)-lactate from methylglyoxal: step 2/2. Thiolesterase that catalyzes the hydrolysis of S-D-lactoyl-glutathione to form glutathione and D-lactic acid. The chain is Hydroxyacylglutathione hydrolase from Synechococcus sp. (strain JA-3-3Ab) (Cyanobacteria bacterium Yellowstone A-Prime).